The following is a 506-amino-acid chain: Apolipoprotein N-acyltransferase (506 aa).

6 helical membrane passes run 24–44 (LALAPFDFWPLVLVSVAMFYL), 58–78 (GWCYGFGLYGAGTSWIYVSIH), 85–105 (ALLAGLLMLLFIAAIALFFAL), 125–145 (LAFAALWLWQEAFRGWFLTGF), 162–182 (LAPVGGVWLISFALGLTAALL), and 192–212 (KSFLAMGVLLLLAPWVAGLAL). Residues 230–470 (MQGNIEQSMK…RGVLYGEVVP (241 aa)) form the CN hydrolase domain. The active-site Proton acceptor is the glutamate 269. The active site involves lysine 330. Cysteine 382 serves as the catalytic Nucleophile. Residues 482-502 (SWPLAIVCLLLFGWALLAARI) traverse the membrane as a helical segment.

The protein belongs to the CN hydrolase family. Apolipoprotein N-acyltransferase subfamily.

Its subcellular location is the cell inner membrane. The catalysed reaction is N-terminal S-1,2-diacyl-sn-glyceryl-L-cysteinyl-[lipoprotein] + a glycerophospholipid = N-acyl-S-1,2-diacyl-sn-glyceryl-L-cysteinyl-[lipoprotein] + a 2-acyl-sn-glycero-3-phospholipid + H(+). Its pathway is protein modification; lipoprotein biosynthesis (N-acyl transfer). Functionally, catalyzes the phospholipid dependent N-acylation of the N-terminal cysteine of apolipoprotein, the last step in lipoprotein maturation. The polypeptide is Apolipoprotein N-acyltransferase (Pseudomonas syringae pv. tomato (strain ATCC BAA-871 / DC3000)).